Here is a 155-residue protein sequence, read N- to C-terminus: Troponin C, isoform 2 (155 aa).

EF-hand domains are found at residues Glu-11–Pro-46, Phe-47–Glu-82, Ala-87–Gln-122, and Leu-123–Glu-155. Ca(2+)-binding residues include Asp-60, Asp-62, Ser-64, Arg-66, and Glu-71. Ca(2+)-binding residues include Asp-136, Asp-138, Ser-140, Thr-142, and Glu-147.

Belongs to the troponin C family. As to expression, accumulates almost exclusively in larval muscles.

This is Troponin C, isoform 2 (TpnC47D) from Drosophila melanogaster (Fruit fly).